We begin with the raw amino-acid sequence, 109 residues long: C-X-C motif chemokine 13 (109 aa).

An N-terminal signal peptide occupies residues 1–22 (MKFISTSLLLMLLVSSLSPVQG). Disulfide bonds link Cys-33–Cys-60 and Cys-35–Cys-76.

Belongs to the intercrine alpha (chemokine CxC) family. In terms of tissue distribution, highest levels in liver, followed by spleen, lymph node, appendix and stomach. Low levels in salivary gland, mammary gland and fetal spleen.

It localises to the secreted. Its function is as follows. Chemotactic for B-lymphocytes but not for T-lymphocytes, monocytes and neutrophils. Does not induce calcium release in B-lymphocytes. Binds to BLR1/CXCR5. The polypeptide is C-X-C motif chemokine 13 (CXCL13) (Homo sapiens (Human)).